Reading from the N-terminus, the 137-residue chain is Mobilization protein B (137 aa).

As to quaternary structure, interacts with MobA and MobC to form the relaxosome.

In terms of biological role, this protein is essential to promote the specific transfer of the plasmid in the presence of conjugative plasmids. This chain is Mobilization protein B (mobB), found in Escherichia coli.